Reading from the N-terminus, the 153-residue chain is MKLAAPSLALLLSTATLVSGAWNRRSRSCGGVLRDPPGKIFNSDGPQKDCVWTIKVKPHFHVVLAIPPLNLSCGKEYVELLDGPPGSEIIGKICGGISLVFRSSSNIATIKYLRTSGQRASPFHIYYYADPEGPLQFPYFDRQTIIATEKNIP.

An N-terminal signal peptide occupies residues 1-20 (MKLAAPSLALLLSTATLVSG). The residue at position 21 (A21) is an N-acetylalanine. 2 disulfide bridges follow: C29–C50 and C73–C94. Residues 29–130 (CGGVLRDPPG…SPFHIYYYAD (102 aa)) enclose the CUB domain. Positions 93-130 (ICGGISLVFRSSSNIATIKYLRTSGQRASPFHIYYYAD) are heparin-binding.

The protein belongs to the spermadhesin family. Post-translationally, partial N-acetylation differentiates isoforms AWN-1 (not acetylated) and AWN-2 (acetylated).

It localises to the secreted. Functionally, AWN proteins mediate the binding of boar spermatozoa to component(s) of the egg's zona pellucida by a carbohydrate-binding mechanism. Awn proteins are secretory components of the male accessory glands being coated to the sperm surface at the time of ejaculation. They possess as well heparin-, serine-protease-inhibitor-binding capability. The polypeptide is Carbohydrate-binding protein AWN (Sus scrofa (Pig)).